The following is a 275-amino-acid chain: 2,3,4,5-tetrahydropyridine-2,6-dicarboxylate N-succinyltransferase (275 aa).

2 residues coordinate substrate: R108 and D145.

This sequence belongs to the transferase hexapeptide repeat family. In terms of assembly, homotrimer.

It is found in the cytoplasm. It catalyses the reaction (S)-2,3,4,5-tetrahydrodipicolinate + succinyl-CoA + H2O = (S)-2-succinylamino-6-oxoheptanedioate + CoA. It functions in the pathway amino-acid biosynthesis; L-lysine biosynthesis via DAP pathway; LL-2,6-diaminopimelate from (S)-tetrahydrodipicolinate (succinylase route): step 1/3. The protein is 2,3,4,5-tetrahydropyridine-2,6-dicarboxylate N-succinyltransferase of Roseobacter denitrificans (strain ATCC 33942 / OCh 114) (Erythrobacter sp. (strain OCh 114)).